A 277-amino-acid chain; its full sequence is Large ribosomal subunit protein uL2 (277 aa).

A disordered region spans residues 219 to 277 (TVRGSVMNPNDHPHGGGEGRSPIGHPSPRTPWGKPALGYKTRKNKKYSDRFIVKRRHDK).

It belongs to the universal ribosomal protein uL2 family. As to quaternary structure, part of the 50S ribosomal subunit. Forms a bridge to the 30S subunit in the 70S ribosome.

In terms of biological role, one of the primary rRNA binding proteins. Required for association of the 30S and 50S subunits to form the 70S ribosome, for tRNA binding and peptide bond formation. It has been suggested to have peptidyltransferase activity; this is somewhat controversial. Makes several contacts with the 16S rRNA in the 70S ribosome. This is Large ribosomal subunit protein uL2 from Clostridium botulinum (strain Okra / Type B1).